Here is a 412-residue protein sequence, read N- to C-terminus: Phosphoglycerate kinase (412 aa).

Substrate-binding positions include 26 to 28 (DFN), Arg-42, 65 to 68 (HLGR), Arg-133, and Arg-166. ATP contacts are provided by residues Lys-217, Gly-308, Glu-339, and 368-371 (GGDS).

Belongs to the phosphoglycerate kinase family. In terms of assembly, monomer.

It is found in the cytoplasm. It catalyses the reaction (2R)-3-phosphoglycerate + ATP = (2R)-3-phospho-glyceroyl phosphate + ADP. It participates in carbohydrate degradation; glycolysis; pyruvate from D-glyceraldehyde 3-phosphate: step 2/5. The chain is Phosphoglycerate kinase from Synechococcus sp. (strain JA-3-3Ab) (Cyanobacteria bacterium Yellowstone A-Prime).